The following is a 117-amino-acid chain: Photosystem II reaction center Psb28 protein (117 aa).

This sequence belongs to the Psb28 family. Part of the photosystem II complex.

It is found in the cellular thylakoid membrane. The sequence is that of Photosystem II reaction center Psb28 protein from Prochlorococcus marinus (strain MIT 9211).